The primary structure comprises 565 residues: Liver carboxylesterase 1 (565 aa).

The first 18 residues, 1 to 18, serve as a signal peptide directing secretion; it reads MWLCALALASLAACTAWG. Asn-79 carries N-linked (GlcNAc...) asparagine glycosylation. Residues Cys-87 and Cys-116 are joined by a disulfide bond. The Acyl-ester intermediate role is filled by Ser-221. A disulfide bond links Cys-273 and Cys-284. The active-site Charge relay system is the Glu-353. An N-linked (GlcNAc...) asparagine glycan is attached at Asn-389. His-467 serves as the catalytic Charge relay system. Leu-565 is a short sequence motif (prevents secretion from ER).

The protein belongs to the type-B carboxylesterase/lipase family. As to quaternary structure, monomer.

The protein resides in the endoplasmic reticulum lumen. It catalyses the reaction a carboxylic ester + H2O = an alcohol + a carboxylate + H(+). In terms of biological role, involved in the detoxification of xenobiotics and in the activation of ester and amide prodrugs. The polypeptide is Liver carboxylesterase 1 (Oryctolagus cuniculus (Rabbit)).